The chain runs to 329 residues: uncharacterized protein (329 aa).

Coiled coils occupy residues 57 to 119 (KKEE…LQEV) and 224 to 250 (AQRQ…LGNV).

This is an uncharacterized protein from Macaca fascicularis (Crab-eating macaque).